The chain runs to 261 residues: Pantothenate synthetase (261 aa).

29–36 (MGALHNGH) serves as a coordination point for ATP. Residue histidine 36 is the Proton donor of the active site. (R)-pantoate is bound at residue glutamine 60. Glutamine 60 serves as a coordination point for beta-alanine. 147-150 (GEKD) provides a ligand contact to ATP. Glutamine 153 contributes to the (R)-pantoate binding site. 184-187 (LSSR) provides a ligand contact to ATP.

The protein belongs to the pantothenate synthetase family. In terms of assembly, homodimer.

Its subcellular location is the cytoplasm. The catalysed reaction is (R)-pantoate + beta-alanine + ATP = (R)-pantothenate + AMP + diphosphate + H(+). The protein operates within cofactor biosynthesis; (R)-pantothenate biosynthesis; (R)-pantothenate from (R)-pantoate and beta-alanine: step 1/1. Its function is as follows. Catalyzes the condensation of pantoate with beta-alanine in an ATP-dependent reaction via a pantoyl-adenylate intermediate. In Francisella philomiragia subsp. philomiragia (strain ATCC 25017 / CCUG 19701 / FSC 153 / O#319-036), this protein is Pantothenate synthetase.